Reading from the N-terminus, the 602-residue chain is MAAVSVFPGVRLLSIGDANGEIQRHAEQRELRLEARAGDIALYNAENVCVFKCTITRDTECSRVGKQSFIVTLGCNSVLVQFATPADFCSFYNIIKSCRCPATERSVFSERTEESSAVQYFQFYGYLSQQQNMMQDYVRTGTYQRAILQNHTDFKDKVVLDVGCGSGILSFFAVQAGARKVYAVEASSMAQHAELLVKSNNLTDRVVVIPGKVEEISLPEQVDMIISEPMGYMLFNERMLESYLHAKKFLKPNGNMFPTIGDVHLAPFTDEQLYMEQFTKANFWYQPSFHGVDLSALRGAAVDEYFKQPIVDTFDIRILMAKSVKYTVNFLDAKETDLHRIEIPFSFHMLHSGLVHGLAFWFDVAFIGSIMTVWLSTAPTEPLTHWYQVRCLLQSPIFTKAGDTLSGTVLLIANKKQSYDISIVAQVDQTGSKSSNLLDLKNPFFRYTGSAPSPPPGSHYSSPSENMWNTGGAYTMNTGMGMGGMPTAYDLSSVIGGSSGISHSNLIPLGEPPAVSCPPAPLHSEPQDLTLGTSTNTGIVNHTHSRMGSIMSTGIVQGSAGGQAASNSSSHYPVNNQFTMGGPAISMASPMSITTNTMHYGS.

The region spanning 117–424 (AVQYFQFYGY…KKQSYDISIV (308 aa)) is the SAM-dependent MTase PRMT-type domain. 6 residues coordinate S-adenosyl-L-methionine: Q130, R139, G163, E185, E214, and S242. A transactivation domain region spans residues 470–602 (TGGAYTMNTG…ITTNTMHYGS (133 aa)).

The protein belongs to the class I-like SAM-binding methyltransferase superfamily. Protein arginine N-methyltransferase family. In terms of assembly, homodimer.

It localises to the nucleus. Its subcellular location is the cytoplasm. The protein localises to the chromosome. It catalyses the reaction L-arginyl-[protein] + 2 S-adenosyl-L-methionine = N(omega),N(omega)-dimethyl-L-arginyl-[protein] + 2 S-adenosyl-L-homocysteine + 2 H(+). Functionally, methylates (mono- and asymmetric dimethylation) the guanidino nitrogens of arginyl residues in several proteins involved in DNA packaging, transcription regulation, pre-mRNA splicing, and mRNA stability. Recruited to promoters upon gene activation together with histone acetyltransferases from EP300/P300 and p160 families, methylates histone H3 at 'Arg-17' (H3R17me) and activates transcription via chromatin remodeling. The sequence is that of Histone-arginine methyltransferase CARM1 (carm1) from Xenopus laevis (African clawed frog).